We begin with the raw amino-acid sequence, 187 residues long: Calcium and integrin-binding family member 2 (187 aa).

EF-hand domains are found at residues 66–101, 103–138, and 144–179; these read RENPFKERIVEAFSEDGEGNLTFNDFVDMFSVLCES, PRELKANYAFKIYDFNTDNFICKEDLEMTLARLTKS, and EVVLVCDKVIEEADLDGDGKLGFADFEDMIAKAPDF. The Ca(2+) site is built by D116, N118, D120, D127, D157, D159, D161, K163, and D168.

Monomer. Homodimer. Interacts with WHRN and MYO7A. Interacts with ITGA2B (via C-terminus cytoplasmic tail region); this interaction is stabilized/increased in a calcium and magnesium-dependent manner. Interacts with ITGA7 (via C-terminus cytoplasmic tail region); this interaction is stabilized/increased in a calcium and magnesium-dependent manner. Interacts with TMC1. Interacts with TMC2. Interacts with PIEZO1. As to expression, expressed in inner and outer segments of photoreceptor cells, as well as in the pigmented epithelium. Also observed in the inner and outer plexiform layers and in the ganglion cell layer (at protein level). Expressed in sensory hair cell stereocilia, with expression mainly at the basal body of the kinocilium and in the hair bundle stereocilia; and the apical surface of hair cells (at protein level). Located in the tip region of the stereocilia and at the apical surface of hair cells around the cuticular plate (at protein level). Not expressed in the hair bundles of the vestibular hair cells. Strongly expressed in skeletal muscles, brain, kidney and liver. Expressed in the skeletal muscle, retina and cochlea. Expressed in megakaryocytes and endothelial cells. Expressed in heart, spleen, lung, and inner ear. In the inner ear, expressed in the vestibule, basilar membrane and spiral ganglion cells. Expressed in the supporting cells in both the organ of Corti and the vestibular sensory epithelia.

It is found in the cytoplasm. The protein resides in the cell projection. Its subcellular location is the stereocilium. The protein localises to the photoreceptor inner segment. It localises to the cilium. It is found in the photoreceptor outer segment. The protein resides in the cell membrane. Its subcellular location is the sarcolemma. In terms of biological role, calcium- and integrin-binding protein that plays a role in intracellular calcium homeostasis. Acts as an auxiliary subunit of the sensory mechanoelectrical transduction (MET) channel in hair cells. Essential for mechanoelectrical transduction (MET) currents in auditory hair cells and thereby required for hearing. Regulates the function of hair cell mechanotransduction by controlling the distribution of transmembrane channel-like proteins TMC1 and TMC2, and by regulating the function of the MET channels in hair cells. Required for the maintenance of auditory hair cell stereocilia bundle morphology and function and for hair-cell survival in the cochlea. Critical for proper photoreceptor cell maintenance and function. Plays a role in intracellular calcium homeostasis by decreasing ATP-induced calcium release. Seems to be dispensable for vestibular functions. The chain is Calcium and integrin-binding family member 2 (Cib2) from Mus musculus (Mouse).